We begin with the raw amino-acid sequence, 322 residues long: Thymidylate synthase (322 aa).

DUMP contacts are provided by residues R25 and 184-185; that span reads RR. The Nucleophile role is filled by C204. Residues 224–227, N235, and 265–267 each bind dUMP; these read RSGD and HIY. (6R)-5,10-methylene-5,6,7,8-tetrahydrofolate is bound at residue D227. A321 is a binding site for (6R)-5,10-methylene-5,6,7,8-tetrahydrofolate.

Belongs to the thymidylate synthase family. Bacterial-type ThyA subfamily. In terms of assembly, homodimer.

The protein localises to the cytoplasm. It catalyses the reaction dUMP + (6R)-5,10-methylene-5,6,7,8-tetrahydrofolate = 7,8-dihydrofolate + dTMP. The protein operates within pyrimidine metabolism; dTTP biosynthesis. In terms of biological role, catalyzes the reductive methylation of 2'-deoxyuridine-5'-monophosphate (dUMP) to 2'-deoxythymidine-5'-monophosphate (dTMP) while utilizing 5,10-methylenetetrahydrofolate (mTHF) as the methyl donor and reductant in the reaction, yielding dihydrofolate (DHF) as a by-product. This enzymatic reaction provides an intracellular de novo source of dTMP, an essential precursor for DNA biosynthesis. The protein is Thymidylate synthase of Leuconostoc mesenteroides subsp. mesenteroides (strain ATCC 8293 / DSM 20343 / BCRC 11652 / CCM 1803 / JCM 6124 / NCDO 523 / NBRC 100496 / NCIMB 8023 / NCTC 12954 / NRRL B-1118 / 37Y).